Here is a 130-residue protein sequence, read N- to C-terminus: Protein ApaG (130 aa).

An ApaG domain is found at 3 to 127; the sequence is EHESCGVRIS…FSLDRPSDRL (125 aa).

This Maricaulis maris (strain MCS10) (Caulobacter maris) protein is Protein ApaG.